We begin with the raw amino-acid sequence, 353 residues long: Methylthioribose-1-phosphate isomerase (353 aa).

Substrate-binding positions include R51–A53, R94, and Q203. D244 acts as the Proton donor in catalysis. Residue N254–K255 coordinates substrate.

It belongs to the eIF-2B alpha/beta/delta subunits family. MtnA subfamily.

The enzyme catalyses 5-(methylsulfanyl)-alpha-D-ribose 1-phosphate = 5-(methylsulfanyl)-D-ribulose 1-phosphate. The protein operates within amino-acid biosynthesis; L-methionine biosynthesis via salvage pathway; L-methionine from S-methyl-5-thio-alpha-D-ribose 1-phosphate: step 1/6. Functionally, catalyzes the interconversion of methylthioribose-1-phosphate (MTR-1-P) into methylthioribulose-1-phosphate (MTRu-1-P). The protein is Methylthioribose-1-phosphate isomerase of Nostoc punctiforme (strain ATCC 29133 / PCC 73102).